A 1534-amino-acid chain; its full sequence is DNA-directed RNA polymerase subunit beta'' (1534 aa).

Zn(2+)-binding residues include C220, C296, C303, and C306. Basic and acidic residues-rich tracts occupy residues 644-668 and 678-688; these read RTQE…RTRE and PENKYRTREGE. 2 disordered regions span residues 644–698 and 719–800; these read RTQE…EDEY and YRTL…KKEG. Acidic residues-rich tracts occupy residues 744–762 and 770–789; these read GEYE…SSED and TLEE…EYGS.

This sequence belongs to the RNA polymerase beta' chain family. RpoC2 subfamily. In plastids the minimal PEP RNA polymerase catalytic core is composed of four subunits: alpha, beta, beta', and beta''. When a (nuclear-encoded) sigma factor is associated with the core the holoenzyme is formed, which can initiate transcription. It depends on Zn(2+) as a cofactor.

Its subcellular location is the plastid. The protein localises to the chloroplast. It catalyses the reaction RNA(n) + a ribonucleoside 5'-triphosphate = RNA(n+1) + diphosphate. Its function is as follows. DNA-dependent RNA polymerase catalyzes the transcription of DNA into RNA using the four ribonucleoside triphosphates as substrates. The chain is DNA-directed RNA polymerase subunit beta'' from Saccharum officinarum (Sugarcane).